We begin with the raw amino-acid sequence, 446 residues long: Bifunctional protein GlmU (446 aa).

The interval 1 to 226 is pyrophosphorylase; that stretch reads MLAVAILAAG…PDEVNGINDR (226 aa). UDP-N-acetyl-alpha-D-glucosamine contacts are provided by residues 7–10, lysine 21, glutamine 73, and 78–79; these read LAAG and GT. Aspartate 103 is a Mg(2+) binding site. UDP-N-acetyl-alpha-D-glucosamine is bound by residues glycine 140, glutamate 155, asparagine 170, and asparagine 224. Position 224 (asparagine 224) interacts with Mg(2+). Residues 227–247 form a linker region; it reads CQLANCEALLQERLRNYWMKE. Positions 248–446 are N-acetyltransferase; it reads GVTFTDPASC…SKQLIKNGWQ (199 aa). UDP-N-acetyl-alpha-D-glucosamine-binding residues include arginine 329 and lysine 347. The Proton acceptor role is filled by histidine 359. UDP-N-acetyl-alpha-D-glucosamine contacts are provided by tyrosine 362 and asparagine 373. Acetyl-CoA-binding positions include alanine 376, 382–383, alanine 419, and arginine 436; that span reads NY.

In the N-terminal section; belongs to the N-acetylglucosamine-1-phosphate uridyltransferase family. It in the C-terminal section; belongs to the transferase hexapeptide repeat family. In terms of assembly, homotrimer. Mg(2+) serves as cofactor.

It localises to the cytoplasm. The enzyme catalyses alpha-D-glucosamine 1-phosphate + acetyl-CoA = N-acetyl-alpha-D-glucosamine 1-phosphate + CoA + H(+). It catalyses the reaction N-acetyl-alpha-D-glucosamine 1-phosphate + UTP + H(+) = UDP-N-acetyl-alpha-D-glucosamine + diphosphate. It participates in nucleotide-sugar biosynthesis; UDP-N-acetyl-alpha-D-glucosamine biosynthesis; N-acetyl-alpha-D-glucosamine 1-phosphate from alpha-D-glucosamine 6-phosphate (route II): step 2/2. The protein operates within nucleotide-sugar biosynthesis; UDP-N-acetyl-alpha-D-glucosamine biosynthesis; UDP-N-acetyl-alpha-D-glucosamine from N-acetyl-alpha-D-glucosamine 1-phosphate: step 1/1. It functions in the pathway bacterial outer membrane biogenesis; LPS lipid A biosynthesis. Its function is as follows. Catalyzes the last two sequential reactions in the de novo biosynthetic pathway for UDP-N-acetylglucosamine (UDP-GlcNAc). The C-terminal domain catalyzes the transfer of acetyl group from acetyl coenzyme A to glucosamine-1-phosphate (GlcN-1-P) to produce N-acetylglucosamine-1-phosphate (GlcNAc-1-P), which is converted into UDP-GlcNAc by the transfer of uridine 5-monophosphate (from uridine 5-triphosphate), a reaction catalyzed by the N-terminal domain. This chain is Bifunctional protein GlmU, found in Prochlorococcus marinus (strain MIT 9313).